The chain runs to 230 residues: Ribosomal RNA small subunit methyltransferase G (230 aa).

Residues Gly-93, Leu-98, 144 to 145, and Arg-158 each bind S-adenosyl-L-methionine; that span reads IE.

The protein belongs to the methyltransferase superfamily. RNA methyltransferase RsmG family.

It is found in the cytoplasm. It catalyses the reaction guanosine(527) in 16S rRNA + S-adenosyl-L-methionine = N(7)-methylguanosine(527) in 16S rRNA + S-adenosyl-L-homocysteine. In terms of biological role, specifically methylates the N7 position of guanine in position 527 of 16S rRNA. This is Ribosomal RNA small subunit methyltransferase G from Bordetella parapertussis (strain 12822 / ATCC BAA-587 / NCTC 13253).